A 215-amino-acid chain; its full sequence is MOB kinase activator-like 1B (215 aa).

The tract at residues 1–25 (MSLFGLGRNQKTFRPKKSAPSGTKG) is disordered. Zn(2+) is bound by residues cysteine 79, cysteine 84, histidine 161, and histidine 166.

This sequence belongs to the MOB1/phocein family. Interacts with SIK1. In terms of tissue distribution, expression is detected along the vasculature in cotyledons, hypocotyls and roots of 3- to 4-day-old seedlings.

In Arabidopsis thaliana (Mouse-ear cress), this protein is MOB kinase activator-like 1B.